We begin with the raw amino-acid sequence, 360 residues long: Isopentenyl-diphosphate delta-isomerase (360 aa).

12-13 (RK) is a substrate binding site. FMN is bound by residues 69-71 (SMT), Ser99, and Asn130. Position 99–101 (99–101 (SQR)) interacts with substrate. Gln164 lines the substrate pocket. Glu165 serves as a coordination point for Mg(2+). Residues Lys196, Thr226, 277-279 (GVR), and 298-299 (AK) each bind FMN.

Belongs to the IPP isomerase type 2 family. Homooctamer. Dimer of tetramers. FMN is required as a cofactor. NADPH serves as cofactor. The cofactor is Mg(2+).

Its subcellular location is the cytoplasm. The catalysed reaction is isopentenyl diphosphate = dimethylallyl diphosphate. Functionally, involved in the biosynthesis of isoprenoids. Catalyzes the 1,3-allylic rearrangement of the homoallylic substrate isopentenyl (IPP) to its allylic isomer, dimethylallyl diphosphate (DMAPP). The chain is Isopentenyl-diphosphate delta-isomerase from Halobacterium salinarum (strain ATCC 700922 / JCM 11081 / NRC-1) (Halobacterium halobium).